Here is a 131-residue protein sequence, read N- to C-terminus: Small ribosomal subunit protein uS8 (131 aa).

This sequence belongs to the universal ribosomal protein uS8 family. In terms of assembly, part of the 30S ribosomal subunit. Contacts proteins S5 and S12.

In terms of biological role, one of the primary rRNA binding proteins, it binds directly to 16S rRNA central domain where it helps coordinate assembly of the platform of the 30S subunit. In Cupriavidus necator (strain ATCC 17699 / DSM 428 / KCTC 22496 / NCIMB 10442 / H16 / Stanier 337) (Ralstonia eutropha), this protein is Small ribosomal subunit protein uS8.